The chain runs to 120 residues: Small ribosomal subunit protein uS17m (120 aa).

The N-terminal 20 residues, 1–20, are a transit peptide targeting the mitochondrion; that stretch reads MSIVRSSVHAKWVVGKVIGT.

This sequence belongs to the universal ribosomal protein uS17 family. As to quaternary structure, component of the mitochondrial ribosome small subunit (28S) which comprises a 12S rRNA and about 30 distinct proteins.

Its subcellular location is the mitochondrion. The sequence is that of Small ribosomal subunit protein uS17m (Mrps17) from Mus musculus (Mouse).